A 603-amino-acid polypeptide reads, in one-letter code: MSNTLSLIQSNASNPKVWVVIGVTVAGIVILAETRKRRIRALREEDFGAFLDRFELLPFPPPPPPAAKQSLSGLTFSISDAFDVKDYITGFGCPQWKKTHEAAEKTAVVVTTLLKNGATCVGKTIMDELGFGIIGENKHYGTPINPLMPDNVPGGCSSGSAVSVGAELVDFSLGIDTTGGVRVPAAFCGILGFRPSQGTVSSVGVLPNSQSLETVGWFASDPSVLCQVGHALLNLSAVTHRRQRSLIFADDLFELSDIPKQKSVQVVRKAIENLSGYKTPKHVNVGQYVASNVPSLAEFCEQSGKSQNSASTLRALSSVMLAIQRHEFKTNHEEWWQTCKSFLGPRFSNDVVTALKSKNESIKSLYRVKNEMRATIQSLLKEDGILVIPTVADPPPRLNTKRNKSLNEFLDRTYALSCIASMSGCCQVTIPLGEHGDRPISVSLLTYYGGDKFLLDTTLDVYASLQDQAKLASNLAPVSDTNGNMEASEVMKEKGNAAYKGKQWNKAVNFYTEAIKLNGANATYYCNRAAAFLELCCFQQAEQDCTKAMLIDKKNVKAYLRRGTARESLVRYKEAAADFRHALVLEPQNKTAKVAEKRLRKHI.

Ser-2 is subject to N-acetylserine. Residues 16 to 32 (KVWVVIGVTVAGIVILA) form a helical membrane-spanning segment. TPR repeat units follow at residues 488–521 (SEVMKEKGNAAYKGKQWNKAVNFYTEAIKLNGAN), 523–555 (TYYCNRAAAFLELCCFQQAEQDCTKAMLIDKKN), and 556–589 (VKAYLRRGTARESLVRYKEAAADFRHALVLEPQN).

Expressed in roots and flower buds. Detected in leaves.

It localises to the mitochondrion outer membrane. Chaperone receptor mediating Hsp90-dependent protein targeting to mitochondria. The protein is Outer envelope protein 64, mitochondrial (OM64) of Arabidopsis thaliana (Mouse-ear cress).